A 259-amino-acid chain; its full sequence is Methanethiol S-methyltransferase 2 (259 aa).

The next 5 membrane-spanning stretches (helical) occupy residues 5-25 (LAIL…FLYA), 46-66 (LGEA…QHSV), 88-108 (TYVL…RPIP), 115-135 (SGIA…IAFA), and 182-202 (FLLA…FALA).

This sequence belongs to the nurim family.

The protein resides in the membrane. The catalysed reaction is methanethiol + S-adenosyl-L-methionine = dimethyl sulfide + S-adenosyl-L-homocysteine + H(+). Catalyzes the methylation of methanethiol (MeSH) to yield dimethylsulphide (DMS). The chain is Methanethiol S-methyltransferase 2 from Bradyrhizobium diazoefficiens (strain JCM 10833 / BCRC 13528 / IAM 13628 / NBRC 14792 / USDA 110).